A 475-amino-acid chain; its full sequence is Tryptophan synthase beta chain 2, chloroplastic (475 aa).

The span at methionine 1–leucine 21 shows a compositional bias: polar residues. Residues methionine 1–serine 44 are disordered. The transit peptide at methionine 1 to cysteine 51 directs the protein to the chloroplast. Threonine 52 bears the N-acetylthreonine mark. Lysine 170 is subject to N6-(pyridoxal phosphate)lysine.

The protein belongs to the TrpB family. As to quaternary structure, tetramer of two alpha and two beta chains. Pyridoxal 5'-phosphate serves as cofactor.

The protein localises to the plastid. It is found in the chloroplast. It carries out the reaction (1S,2R)-1-C-(indol-3-yl)glycerol 3-phosphate + L-serine = D-glyceraldehyde 3-phosphate + L-tryptophan + H2O. The protein operates within amino-acid biosynthesis; L-tryptophan biosynthesis; L-tryptophan from chorismate: step 5/5. The beta subunit is responsible for the synthesis of L-tryptophan from indole and L-serine. This chain is Tryptophan synthase beta chain 2, chloroplastic (TSB2), found in Arabidopsis thaliana (Mouse-ear cress).